Reading from the N-terminus, the 486-residue chain is B-type cell cycle switch protein ccs52B (486 aa).

The PEST motif motif lies at 24-36; sequence RLETLSTPPSSAS. Over residues 27–36 the composition is skewed to polar residues; the sequence is TLSTPPSSAS. Residues 27 to 57 form a disordered region; sequence TLSTPPSSASPRAISNLSSTPSPSKSSKCSD. The segment covering 41 to 53 has biased composition (low complexity); the sequence is SNLSSTPSPSKSS. A C-box motif is present at residues 57–63; it reads DRFIPCR. Positions 87-98 match the CSM motif motif; it reads AYNRLLKSELFG. WD repeat units follow at residues 177–214, 218–257, 260–297, 301–340, 343–385, 387–428, and 431–470; these read QDDFYLNLVDWSSQNTLAVGLGTCVYLWSASNSKVTKL, GPYDGVCSVQWTKEGSFISIGTNGGQVQIWDGTKCKKVRT, GHQTRTGVLAWNSRILASGSRDRNILQHDMRVPSDFIG, GHKSEVCGLKWSCDDRELASGGNDNQLLVWNQHSQQPTLR, EHTA…QLNS, DTGS…KVAT, and GHSMRVLYLAMSPDGQTIVTGAGDETLRFWNVFPSMKTPA.

Belongs to the WD repeat CDC20/Fizzy family. In terms of tissue distribution, mostly expressed in shoot apices and, to a lower extent, in roots, especially in root tips, and in hypocotyls. Expressed in nodulation-competent root zone but not in the nodules.

Its pathway is protein modification; protein ubiquitination. In terms of biological role, component of the anaphase promoting complex/cyclosome (APC/C), a cell cycle-regulated E3 ubiquitin-protein ligase complex that controls progression through mitosis and the G1 phase of the cell cycle. This Medicago truncatula (Barrel medic) protein is B-type cell cycle switch protein ccs52B.